Consider the following 38-residue polypeptide: Beta-galactosidase (38 aa).

It belongs to the glycosyl hydrolase 35 family. In terms of assembly, heterodimer of a large and a small subunit. Post-translationally, the small subunit is N-glycosylated.

The enzyme catalyses Hydrolysis of terminal non-reducing beta-D-galactose residues in beta-D-galactosides.. Involved in cell wall degradation. Degrades polysaccharides containing beta-(1--&gt;4)-linked galactans, acting as an exo-(1--&gt;4)-beta-D-galactanase. The chain is Beta-galactosidase from Hordeum vulgare (Barley).